We begin with the raw amino-acid sequence, 86 residues long: Elongation factor 1-beta (86 aa).

Belongs to the EF-1-beta/EF-1-delta family.

Its function is as follows. Promotes the exchange of GDP for GTP in EF-1-alpha/GDP, thus allowing the regeneration of EF-1-alpha/GTP that could then be used to form the ternary complex EF-1-alpha/GTP/AAtRNA. The sequence is that of Elongation factor 1-beta from Methanocorpusculum labreanum (strain ATCC 43576 / DSM 4855 / Z).